A 356-amino-acid polypeptide reads, in one-letter code: Protein RecA (356 aa).

67–74 (GPESSGKT) is an ATP binding site.

Belongs to the RecA family.

The protein resides in the cytoplasm. Functionally, can catalyze the hydrolysis of ATP in the presence of single-stranded DNA, the ATP-dependent uptake of single-stranded DNA by duplex DNA, and the ATP-dependent hybridization of homologous single-stranded DNAs. It interacts with LexA causing its activation and leading to its autocatalytic cleavage. This Yersinia pestis (strain Pestoides F) protein is Protein RecA.